A 408-amino-acid chain; its full sequence is Tryptophan synthase beta chain (408 aa).

An N6-(pyridoxal phosphate)lysine modification is found at lysine 90.

It belongs to the TrpB family. Tetramer of two alpha and two beta chains. Requires pyridoxal 5'-phosphate as cofactor.

It carries out the reaction (1S,2R)-1-C-(indol-3-yl)glycerol 3-phosphate + L-serine = D-glyceraldehyde 3-phosphate + L-tryptophan + H2O. Its pathway is amino-acid biosynthesis; L-tryptophan biosynthesis; L-tryptophan from chorismate: step 5/5. In terms of biological role, the beta subunit is responsible for the synthesis of L-tryptophan from indole and L-serine. This Bacillus licheniformis (strain ATCC 14580 / DSM 13 / JCM 2505 / CCUG 7422 / NBRC 12200 / NCIMB 9375 / NCTC 10341 / NRRL NRS-1264 / Gibson 46) protein is Tryptophan synthase beta chain.